Here is a 183-residue protein sequence, read N- to C-terminus: Calmodulin-like protein 3 (183 aa).

4 consecutive EF-hand domains span residues 7–42 (EQIA…LGQS), 43–78 (PTEA…KLRD), 80–115 (GAED…LSDP), and 116–151 (LSDD…KRRQ). Ca(2+)-binding residues include D20, D22, D24, T26, E31, D56, D58, S60, S62, E67, D93, D95, N97, E104, D129, D131, D133, Q135, and E140. The tract at residues 154–183 (MEGHGSGGHRSSNSHKKSGCCGPNSSCTIL) is disordered. Residues C173 and C174 are each lipidated (S-palmitoyl cysteine). At C180 the chain carries Cysteine methyl ester. C180 carries the S-farnesyl cysteine lipid modification. Positions 181–183 (TIL) are cleaved as a propeptide — removed in mature form.

This sequence belongs to the calmodulin family.

It is found in the membrane. In terms of biological role, potential calcium sensor. The protein is Calmodulin-like protein 3 (CML3) of Oryza sativa subsp. japonica (Rice).